A 311-amino-acid chain; its full sequence is Aspartate carbamoyltransferase catalytic subunit (311 aa).

Carbamoyl phosphate-binding residues include Arg-55 and Thr-56. Lys-85 provides a ligand contact to L-aspartate. Carbamoyl phosphate contacts are provided by Arg-106, His-135, and Gln-138. Positions 168 and 230 each coordinate L-aspartate. The carbamoyl phosphate site is built by Leu-268 and Pro-269.

The protein belongs to the aspartate/ornithine carbamoyltransferase superfamily. ATCase family. Heterododecamer (2C3:3R2) of six catalytic PyrB chains organized as two trimers (C3), and six regulatory PyrI chains organized as three dimers (R2).

It carries out the reaction carbamoyl phosphate + L-aspartate = N-carbamoyl-L-aspartate + phosphate + H(+). Its pathway is pyrimidine metabolism; UMP biosynthesis via de novo pathway; (S)-dihydroorotate from bicarbonate: step 2/3. In terms of biological role, catalyzes the condensation of carbamoyl phosphate and aspartate to form carbamoyl aspartate and inorganic phosphate, the committed step in the de novo pyrimidine nucleotide biosynthesis pathway. This Yersinia pestis protein is Aspartate carbamoyltransferase catalytic subunit.